Here is a 504-residue protein sequence, read N- to C-terminus: Probable alpha-L-arabinofuranosidase C (504 aa).

Residues Asn152, Asn181, and Asn269 are each glycosylated (N-linked (GlcNAc...) asparagine).

The protein belongs to the glycosyl hydrolase 51 family.

The protein resides in the secreted. It catalyses the reaction Hydrolysis of terminal non-reducing alpha-L-arabinofuranoside residues in alpha-L-arabinosides.. It functions in the pathway glycan metabolism; L-arabinan degradation. In terms of biological role, alpha-L-arabinofuranosidase involved in the degradation of arabinoxylan, a major component of plant hemicellulose. Acts only on small linear 1,5-alpha-linked L-arabinofuranosyl oligosaccharides. The sequence is that of Probable alpha-L-arabinofuranosidase C (abfC) from Aspergillus flavus (strain ATCC 200026 / FGSC A1120 / IAM 13836 / NRRL 3357 / JCM 12722 / SRRC 167).